Consider the following 363-residue polypeptide: Chorismate synthase (363 aa).

Positions 48 and 54 each coordinate NADP(+). FMN is bound by residues 125–127 (RSS), 237–238 (NA), Gly277, 292–296 (KPTSS), and Arg318.

This sequence belongs to the chorismate synthase family. In terms of assembly, homotetramer. The cofactor is FMNH2.

The enzyme catalyses 5-O-(1-carboxyvinyl)-3-phosphoshikimate = chorismate + phosphate. Its pathway is metabolic intermediate biosynthesis; chorismate biosynthesis; chorismate from D-erythrose 4-phosphate and phosphoenolpyruvate: step 7/7. In terms of biological role, catalyzes the anti-1,4-elimination of the C-3 phosphate and the C-6 proR hydrogen from 5-enolpyruvylshikimate-3-phosphate (EPSP) to yield chorismate, which is the branch point compound that serves as the starting substrate for the three terminal pathways of aromatic amino acid biosynthesis. This reaction introduces a second double bond into the aromatic ring system. The chain is Chorismate synthase from Stutzerimonas stutzeri (strain A1501) (Pseudomonas stutzeri).